Reading from the N-terminus, the 303-residue chain is D-alanine--D-alanine ligase B (303 aa).

The ATP-grasp domain maps to Lys103–Asp298. An ATP-binding site is contributed by Glu129 to Thr184. The Mg(2+) site is built by Asp252, Glu265, and Asn267.

Belongs to the D-alanine--D-alanine ligase family. Mg(2+) serves as cofactor. It depends on Mn(2+) as a cofactor.

Its subcellular location is the cytoplasm. The enzyme catalyses 2 D-alanine + ATP = D-alanyl-D-alanine + ADP + phosphate + H(+). It functions in the pathway cell wall biogenesis; peptidoglycan biosynthesis. Its function is as follows. Cell wall formation. This chain is D-alanine--D-alanine ligase B, found in Chromobacterium violaceum (strain ATCC 12472 / DSM 30191 / JCM 1249 / CCUG 213 / NBRC 12614 / NCIMB 9131 / NCTC 9757 / MK).